Here is a 104-residue protein sequence, read N- to C-terminus: Large ribosomal subunit protein bL21 (104 aa).

The span at 81-90 (QGYRRHHGHR) shows a compositional bias: basic residues. Residues 81–104 (QGYRRHHGHRQPYTQVKITGISAG) are disordered.

It belongs to the bacterial ribosomal protein bL21 family. In terms of assembly, part of the 50S ribosomal subunit. Contacts protein L20.

Its function is as follows. This protein binds to 23S rRNA in the presence of protein L20. In Halorhodospira halophila (strain DSM 244 / SL1) (Ectothiorhodospira halophila (strain DSM 244 / SL1)), this protein is Large ribosomal subunit protein bL21.